Consider the following 491-residue polypeptide: Probable cytosol aminopeptidase (491 aa).

Mn(2+) contacts are provided by Lys-261 and Asp-266. The active site involves Lys-273. Asp-284, Asp-343, and Glu-345 together coordinate Mn(2+). The active site involves Arg-347.

This sequence belongs to the peptidase M17 family. It depends on Mn(2+) as a cofactor.

The protein localises to the cytoplasm. It catalyses the reaction Release of an N-terminal amino acid, Xaa-|-Yaa-, in which Xaa is preferably Leu, but may be other amino acids including Pro although not Arg or Lys, and Yaa may be Pro. Amino acid amides and methyl esters are also readily hydrolyzed, but rates on arylamides are exceedingly low.. The enzyme catalyses Release of an N-terminal amino acid, preferentially leucine, but not glutamic or aspartic acids.. Presumably involved in the processing and regular turnover of intracellular proteins. Catalyzes the removal of unsubstituted N-terminal amino acids from various peptides. The sequence is that of Probable cytosol aminopeptidase from Geobacter sp. (strain M21).